The primary structure comprises 1772 residues: Gag-Pro-Pol polyprotein (1772 aa).

Residue Gly2 is the site of N-myristoyl glycine; by host attachment. A propeptide spanning residues 101–162 is cleaved from the precursor; it reads AAVAQTEEIL…TKKPKRFPVL (62 aa). The segment covering 113 to 126 has biased composition (polar residues); that stretch reads SSHTELTTKPSQNP. The interval 113-149 is disordered; that stretch reads SSHTELTTKPSQNPDLDLISLDSDDEGAKGSSLKDKN. Residues 138–149 are compositionally biased toward basic and acidic residues; it reads EGAKGSSLKDKN. A PPXY motif motif is present at residues 203-206; sequence PPPY. The PTAP/PSAP motif signature appears at 211–214; that stretch reads PSAP. A coiled-coil region spans residues 217–258; sequence MAVVNPKEELKEKIAQLEEQIKLEELHQALISKLQKLKTGNE. Residues 258-282 form a disordered region; it reads ETVTSPETAGGFSRTPHWPGQHIPK. The CCHC-type zinc finger occupies 548–565; the sequence is GCCFKCGRKGHFAKNCHE. A disordered region spans residues 593–626; it reads KSKTDSQGNPLPPHQGNRTEGPAPGPETSLWGGQ. The 77-residue stretch at 781–857 folds into the Peptidase A2 domain; the sequence is FTGLIDTGAD…LPVNLWGRDL (77 aa). Asp786 serves as the catalytic Protease; shared with dimeric partner. A G-patch domain is found at 868 to 914; the sequence is PSDIVTAQMLAQGYSPGKGLGKNENGILHPIPNQGQFDKKGFGNFLT. In terms of domain architecture, Reverse transcriptase spans 960-1148; sequence LEAGHITESN…DPYTYLGFEL (189 aa). Mg(2+)-binding residues include Asp1025, Asp1100, Asp1101, Asp1371, Glu1400, Asp1421, and Asp1485. In terms of domain architecture, RNase H type-1 spans 1362 to 1493; sequence LNNALLVFTD…ADLATKTVAS (132 aa). The Integrase-type zinc finger occupies 1497-1538; the sequence is TNLESAQNAHTLHHLNAQTLKLMFNIPREQARQIVRQCPICA. Residues His1506, His1510, Cys1534, and Cys1537 each coordinate Zn(2+). The region spanning 1551–1720 is the Integrase catalytic domain; sequence RGLLPNMIWQ…NPRKQFAMVK (170 aa). Mg(2+) is bound by residues Asp1562, Asp1619, and Glu1655. A DNA-binding region (integrase-type) is located at residues 1717–1766; it reads AMVKWKDPLDNTWPWPDPVIIWGRGSVCVYSQTHDAARWLPERLVKQIPN.

It belongs to the retroviral Pol polyprotein family. In terms of assembly, homodimer. Interacts with the G-patch peptide. As to quaternary structure, interacts with the reverse transcriptase/ribonuclease H. In terms of assembly, homotrimer. Requires Mg(2+) as cofactor. In terms of processing, released by autocatalytic processing. The protease can undergo further autoprocessing to yield 2 shorter but enzymatically active forms of 12 kDa and 13 kDa. Post-translationally, myristoylated. Myristoylation of the matrix (MA) domain mediates the transport and binding of Gag polyproteins to the host plasma membrane and is required for the assembly of viral particles. Specific enzymatic cleavages in vivo yield mature proteins.

The protein resides in the virion. It catalyses the reaction DNA(n) + a 2'-deoxyribonucleoside 5'-triphosphate = DNA(n+1) + diphosphate. The catalysed reaction is Endonucleolytic cleavage to 5'-phosphomonoester.. It carries out the reaction dUTP + H2O = dUMP + diphosphate + H(+). Functionally, matrix protein. Its function is as follows. Nucleocapsid protein p14: Nucleocapsid protein. In terms of biological role, capsid protein. The aspartyl protease mediates proteolytic cleavages of Gag and Gag-Pol polyproteins during or shortly after the release of the virion from the plasma membrane. Cleavages take place as an ordered, step-wise cascade to yield mature proteins. This process is called maturation. Displays maximal activity during the budding process just prior to particle release from the cell. Functionally, enhances the activity of the reverse transcriptase. May be part of the mature RT. Its function is as follows. RT is a multifunctional enzyme that converts the viral dimeric RNA genome into dsDNA in the cytoplasm, shortly after virus entry into the cell. This enzyme displays a DNA polymerase activity that can copy either DNA or RNA templates, and a ribonuclease H (RNase H) activity that cleaves the RNA strand of RNA-DNA heteroduplexes in a partially processive 3' to 5' endonucleasic mode. Conversion of viral genomic RNA into dsDNA requires many steps. A tRNA binds to the primer-binding site (PBS) situated at the 5' end of the viral RNA. RT uses the 3' end of the tRNA primer to perfom a short round of RNA-dependent minus-strand DNA synthesis. The reading proceeds through the U5 region and ends after the repeated (R) region which is present at both ends of viral RNA. The portion of the RNA-DNA heteroduplex is digested by the RNase H, resulting in a ssDNA product attached to the tRNA primer. This ssDNA/tRNA hybridizes with the identical R region situated at the 3' end of viral RNA. This template exchange, known as minus-strand DNA strong stop transfer, can be either intra- or intermolecular. RT uses the 3' end of this newly synthesized short ssDNA to perfom the RNA-dependent minus-strand DNA synthesis of the whole template. RNase H digests the RNA template except for a polypurine tract (PPT) situated at the 5' end of the genome. It is not clear if both polymerase and RNase H activities are simultaneous. RNase H probably can proceed both in a polymerase-dependent (RNA cut into small fragments by the same RT performing DNA synthesis) and a polymerase-independent mode (cleavage of remaining RNA fragments by free RTs). Secondly, RT performs DNA-directed plus-strand DNA synthesis using the PPT that has not been removed by RNase H as primers. PPT and tRNA primers are then removed by RNase H. The 3' and 5' ssDNA PBS regions hybridize to form a circular dsDNA intermediate. Strand displacement synthesis by RT to the PBS and PPT ends produces a blunt ended, linear dsDNA copy of the viral genome that includes long terminal repeats (LTRs) at both ends. In terms of biological role, catalyzes viral DNA integration into the host chromosome, by performing a series of DNA cutting and joining reactions. This Macaca mulatta (Rhesus macaque) protein is Gag-Pro-Pol polyprotein (pol).